The following is a 406-amino-acid chain: Propionate kinase (406 aa).

Asn-11 and Lys-18 together coordinate ATP. Asn-11 serves as a coordination point for Mg(2+). Residue Arg-86 participates in substrate binding. Asp-143 functions as the Proton donor/acceptor in the catalytic mechanism. ATP is bound by residues His-175, 203–207 (HLGNG), 278–280 (DMR), and 326–330 (GIGEN).

The protein belongs to the acetokinase family. TdcD subfamily. Homodimer. Mg(2+) serves as cofactor.

It catalyses the reaction propanoate + ATP = propanoyl phosphate + ADP. It functions in the pathway amino-acid degradation; L-threonine degradation via propanoate pathway; propanoate from L-threonine: step 4/4. Functionally, catalyzes the conversion of propionyl phosphate and ADP to propionate and ATP. The polypeptide is Propionate kinase (Yersinia enterocolitica serotype O:8 / biotype 1B (strain NCTC 13174 / 8081)).